A 374-amino-acid polypeptide reads, in one-letter code: tRNA-specific 2-thiouridylase MnmA (374 aa).

ATP-binding positions include 13–20 and Met-39; that span reads GMSGGVDS. Positions 99–101 are interaction with target base in tRNA; the sequence is NPD. Cys-104 functions as the Nucleophile in the catalytic mechanism. The cysteines at positions 104 and 201 are disulfide-linked. Position 128 (Gly-128) interacts with ATP. The interval 151–153 is interaction with tRNA; sequence KDQ. Residue Cys-201 is the Cysteine persulfide intermediate of the active site. An interaction with tRNA region spans residues 313–314; it reads RY.

This sequence belongs to the MnmA/TRMU family.

It localises to the cytoplasm. It carries out the reaction S-sulfanyl-L-cysteinyl-[protein] + uridine(34) in tRNA + AH2 + ATP = 2-thiouridine(34) in tRNA + L-cysteinyl-[protein] + A + AMP + diphosphate + H(+). In terms of biological role, catalyzes the 2-thiolation of uridine at the wobble position (U34) of tRNA, leading to the formation of s(2)U34. The chain is tRNA-specific 2-thiouridylase MnmA from Streptococcus suis (strain 98HAH33).